A 313-amino-acid chain; its full sequence is Ribosomal protein L11 methyltransferase (313 aa).

Residues threonine 164, glycine 185, aspartate 207, and asparagine 249 each coordinate S-adenosyl-L-methionine.

Belongs to the methyltransferase superfamily. PrmA family.

It is found in the cytoplasm. The catalysed reaction is L-lysyl-[protein] + 3 S-adenosyl-L-methionine = N(6),N(6),N(6)-trimethyl-L-lysyl-[protein] + 3 S-adenosyl-L-homocysteine + 3 H(+). Methylates ribosomal protein L11. The protein is Ribosomal protein L11 methyltransferase of Clostridium perfringens (strain ATCC 13124 / DSM 756 / JCM 1290 / NCIMB 6125 / NCTC 8237 / Type A).